The sequence spans 398 residues: NADH-quinone oxidoreductase subunit D (398 aa).

Belongs to the complex I 49 kDa subunit family. NDH-1 is composed of 14 different subunits. Subunits NuoB, C, D, E, F, and G constitute the peripheral sector of the complex.

Its subcellular location is the cell inner membrane. It catalyses the reaction a quinone + NADH + 5 H(+)(in) = a quinol + NAD(+) + 4 H(+)(out). Its function is as follows. NDH-1 shuttles electrons from NADH, via FMN and iron-sulfur (Fe-S) centers, to quinones in the respiratory chain. The immediate electron acceptor for the enzyme in this species is believed to be ubiquinone. Couples the redox reaction to proton translocation (for every two electrons transferred, four hydrogen ions are translocated across the cytoplasmic membrane), and thus conserves the redox energy in a proton gradient. The protein is NADH-quinone oxidoreductase subunit D of Caulobacter vibrioides (strain ATCC 19089 / CIP 103742 / CB 15) (Caulobacter crescentus).